We begin with the raw amino-acid sequence, 122 residues long: uncharacterized protein (122 aa).

4 consecutive transmembrane segments (helical) span residues 7–27 (IVAI…IFCD), 29–49 (LVLA…LGWI), 62–82 (AITG…SKNP), and 89–109 (KEIF…YFGY).

Its subcellular location is the cell membrane. This is an uncharacterized protein from Methanocaldococcus jannaschii (strain ATCC 43067 / DSM 2661 / JAL-1 / JCM 10045 / NBRC 100440) (Methanococcus jannaschii).